The sequence spans 475 residues: Aspartyl/glutamyl-tRNA(Asn/Gln) amidotransferase subunit B (475 aa).

It belongs to the GatB/GatE family. GatB subfamily. Heterotrimer of A, B and C subunits.

It carries out the reaction L-glutamyl-tRNA(Gln) + L-glutamine + ATP + H2O = L-glutaminyl-tRNA(Gln) + L-glutamate + ADP + phosphate + H(+). The enzyme catalyses L-aspartyl-tRNA(Asn) + L-glutamine + ATP + H2O = L-asparaginyl-tRNA(Asn) + L-glutamate + ADP + phosphate + 2 H(+). Its function is as follows. Allows the formation of correctly charged Asn-tRNA(Asn) or Gln-tRNA(Gln) through the transamidation of misacylated Asp-tRNA(Asn) or Glu-tRNA(Gln) in organisms which lack either or both of asparaginyl-tRNA or glutaminyl-tRNA synthetases. The reaction takes place in the presence of glutamine and ATP through an activated phospho-Asp-tRNA(Asn) or phospho-Glu-tRNA(Gln). This Staphylococcus aureus (strain bovine RF122 / ET3-1) protein is Aspartyl/glutamyl-tRNA(Asn/Gln) amidotransferase subunit B.